Consider the following 215-residue polypeptide: Methylosome subunit pICln (215 aa).

Disordered regions lie at residues 88 to 120 (GDPP…DEDD) and 160 to 215 (HPDS…DADE). Acidic residues-rich tracts occupy residues 105 to 120 (AEVD…DEDD), 167 to 190 (DSED…EDDA), and 203 to 215 (LDDD…DADE).

Belongs to the pICln (TC 1.A.47) family. Component of the methylosome, a 20S complex containing at least CLNS1A/pICln, PRMT5/SKB1 and WDR77/MEP50; may mediate SNRPD1 and SNRPD3 methylation. Forms a 6S pICln-Sm complex composed of CLNS1A/pICln, SNRPD1, SNRPD2, SNRPE, SNRPF and SNRPG; ring-like structure where CLNS1A/pICln mimics additional Sm proteins and which is unable to assemble into the core snRNP.

Its subcellular location is the cytoplasm. It is found in the cytosol. The protein localises to the nucleus. It localises to the cytoskeleton. Involved in both the assembly of spliceosomal snRNPs and the methylation of Sm proteins. Chaperone that regulates the assembly of spliceosomal U1, U2, U4 and U5 small nuclear ribonucleoproteins (snRNPs), the building blocks of the spliceosome, and thereby plays an important role in the splicing of cellular pre-mRNAs. Most spliceosomal snRNPs contain a common set of Sm proteins SNRPB, SNRPD1, SNRPD2, SNRPD3, SNRPE, SNRPF and SNRPG that assemble in a heptameric protein ring on the Sm site of the small nuclear RNA to form the core snRNP (Sm core). In the cytosol, the Sm proteins SNRPD1, SNRPD2, SNRPE, SNRPF and SNRPG are trapped in an inactive 6S pICln-Sm complex by the chaperone CLNS1A that controls the assembly of the core snRNP. Dissociation by the SMN complex of CLNS1A from the trapped Sm proteins and their transfer to an SMN-Sm complex triggers the assembly of core snRNPs and their transport to the nucleus. The protein is Methylosome subunit pICln (icln) of Drosophila melanogaster (Fruit fly).